Consider the following 263-residue polypeptide: Hydroxyacylglutathione hydrolase (263 aa).

Zn(2+) contacts are provided by H60, H62, D64, H65, H120, D137, and H175.

This sequence belongs to the metallo-beta-lactamase superfamily. Glyoxalase II family. In terms of assembly, monomer. Requires Zn(2+) as cofactor.

It catalyses the reaction an S-(2-hydroxyacyl)glutathione + H2O = a 2-hydroxy carboxylate + glutathione + H(+). It participates in secondary metabolite metabolism; methylglyoxal degradation; (R)-lactate from methylglyoxal: step 2/2. Functionally, thiolesterase that catalyzes the hydrolysis of S-D-lactoyl-glutathione to form glutathione and D-lactic acid. The sequence is that of Hydroxyacylglutathione hydrolase from Shewanella pealeana (strain ATCC 700345 / ANG-SQ1).